The following is a 58-amino-acid chain: Putative antitoxin VapB16 (58 aa).

In terms of biological role, putative antitoxin component of a possible type II toxin-antitoxin (TA) system. The cognate toxin is VapC16. The protein is Putative antitoxin VapB16 (vapB16) of Mycobacterium tuberculosis (strain ATCC 25618 / H37Rv).